We begin with the raw amino-acid sequence, 333 residues long: Fructose-1,6-bisphosphatase class 1 (333 aa).

Residues Glu-92, Asp-113, Leu-115, and Asp-116 each contribute to the Mg(2+) site. Substrate is bound by residues 116 to 119 (DGSS), Asn-209, Tyr-242, and Lys-272. Glu-278 contributes to the Mg(2+) binding site.

Belongs to the FBPase class 1 family. Homotetramer. Requires Mg(2+) as cofactor.

The protein resides in the cytoplasm. It carries out the reaction beta-D-fructose 1,6-bisphosphate + H2O = beta-D-fructose 6-phosphate + phosphate. It functions in the pathway carbohydrate biosynthesis; Calvin cycle. The protein is Fructose-1,6-bisphosphatase class 1 of Chlorobium phaeobacteroides (strain BS1).